Consider the following 382-residue polypeptide: Per os infectivity factor 2 (382 aa).

Forms the PIF complex together with PIF1 and PIF3. The complex also interacts with per os infectivity factor PIF0.

Its function is as follows. Per os infectivity factor that mediates the specific binding of occluded virions (ODV) to the host midgut target cells. In Autographa californica nuclear polyhedrosis virus (AcMNPV), this protein is Per os infectivity factor 2.